The following is a 298-amino-acid chain: Tyrosine recombinase XerC (298 aa).

A Core-binding (CB) domain is found at 2 to 88; that stretch reads TDLHTDVERY…ALRSFFDWLV (87 aa). Positions 109 to 288 constitute a Tyr recombinase domain; it reads HLPKNIDVDD…DFQHLASVYD (180 aa). Residues Arg-148, Lys-172, His-240, Arg-243, and His-266 contribute to the active site. The active-site O-(3'-phospho-DNA)-tyrosine intermediate is Tyr-275.

Belongs to the 'phage' integrase family. XerC subfamily. Forms a cyclic heterotetrameric complex composed of two molecules of XerC and two molecules of XerD, in which XerC interacts with XerD via its C-terminal region, XerD interacts with XerC via its C-terminal region and so on.

The protein localises to the cytoplasm. FtsK may regulate the catalytic switch between XerC and XerD in the heterotetrameric complex during the two steps of the recombination process. Functionally, site-specific tyrosine recombinase, which acts by catalyzing the cutting and rejoining of the recombining DNA molecules. Binds cooperatively to specific DNA consensus sequences that are separated from XerD binding sites by a short central region, forming the heterotetrameric XerC-XerD complex that recombines DNA substrates. The complex is essential to convert dimers of the bacterial chromosome into monomers to permit their segregation at cell division. It also contributes to the segregational stability of plasmids. In the complex XerC specifically exchanges the top DNA strands. The protein is Tyrosine recombinase XerC of Escherichia coli O45:K1 (strain S88 / ExPEC).